A 383-amino-acid chain; its full sequence is L-lactate dehydrogenase (383 aa).

The 380-residue stretch at 1 to 380 folds into the FMN hydroxy acid dehydrogenase domain; it reads MIISSTFDYR…THESLASTDA (380 aa). Residue Tyr-24 participates in substrate binding. 2 residues coordinate FMN: Ser-106 and Gln-127. Residue Tyr-129 coordinates substrate. Thr-155 is a binding site for FMN. Position 164 (Arg-164) interacts with substrate. Position 251 (Lys-251) interacts with FMN. Catalysis depends on His-275, which acts as the Proton acceptor. Residue Arg-278 participates in substrate binding. An FMN-binding site is contributed by 306 to 330; the sequence is DSGVRSGLDVVRMIAQGADAVMIGR.

Belongs to the FMN-dependent alpha-hydroxy acid dehydrogenase family. FMN is required as a cofactor.

The protein resides in the cell inner membrane. It carries out the reaction (S)-lactate + A = pyruvate + AH2. Functionally, catalyzes the conversion of L-lactate to pyruvate. Is coupled to the respiratory chain. The sequence is that of L-lactate dehydrogenase from Bartonella quintana (strain Toulouse) (Rochalimaea quintana).